A 482-amino-acid polypeptide reads, in one-letter code: Putative metallophosphoesterase F40B5.2 (482 aa).

Helical transmembrane passes span 15 to 35, 129 to 149, 156 to 176, and 205 to 225; these read MNLKLKIAIIVIGFIHVSIAI, ALMMLFLFLSHIAMFFYYIFL, IAITSLSFIAAYAHILIFLLI, and CYHILLALILGFIFMFAGLYT. A divalent metal cation is bound by residues Asp-256, His-258, Asp-288, Asn-319, His-421, and His-423.

The protein belongs to the metallophosphoesterase superfamily. LOC643853 family.

Its subcellular location is the membrane. The chain is Putative metallophosphoesterase F40B5.2 from Caenorhabditis elegans.